We begin with the raw amino-acid sequence, 316 residues long: Protein lifeguard 2 (316 aa).

The segment at 1-53 (MTQGKLSVANKAPGTEGQQQVHGEKKEAPAVPSAPPSYEEATSGEGMKAGAFP) is disordered. A run of 3 helical transmembrane segments spans residues 106–126 (VYTI…LFTF), 138–158 (PGWY…LACC), and 165–185 (FPWN…LTGM). N191 carries an N-linked (GlcNAc...) asparagine glycan. Helical transmembrane passes span 194 to 214 (SVLL…VFSF), 225 to 245 (GVLF…AILL), 250 to 270 (VPWL…LFLA), and 290 to 310 (IFGA…FLQL).

Belongs to the BI1 family. LFG subfamily. As to quaternary structure, interacts with FAS/TNFRSF6 and BAX. As to expression, highly expressed in breast carcinoma tissues. Enhanced expression correlates with the grade of the tumor (grade II/grade III) in primary breast tumors (at protein level). Widely expressed. Expressed at high levels in the brain especially in the hippocampus.

It is found in the cell membrane. It localises to the membrane raft. The protein resides in the postsynaptic cell membrane. Antiapoptotic protein which protects cells uniquely from Fas-induced apoptosis. Regulates Fas-mediated apoptosis in neurons by interfering with caspase-8 activation. May play a role in cerebellar development by affecting cerebellar size, internal granular layer (IGL) thickness, and Purkinje cell (PC) development. This Homo sapiens (Human) protein is Protein lifeguard 2 (FAIM2).